A 152-amino-acid polypeptide reads, in one-letter code: ADP-ribose glycohydrolase OARD1 (152 aa).

Residue Ala-2 is modified to N-acetylalanine. In terms of domain architecture, Macro spans 2–152 (AGSPNEDSEG…TDIRITVYTL (151 aa)). Residue Ser-4 is modified to Phosphoserine. Leu-21 is a binding site for substrate. Lys-84 (nucleophile) is an active-site residue. Substrate-binding positions include 119–125 (RIGCGLD) and Leu-152. Asp-125 functions as the Proton acceptor in the catalytic mechanism.

It localises to the nucleus. The protein localises to the nucleoplasm. Its subcellular location is the nucleolus. It is found in the chromosome. The enzyme catalyses 2''-O-acetyl-ADP-D-ribose + H2O = ADP-D-ribose + acetate + H(+). The catalysed reaction is 5-O-(ADP-D-ribosyl)-L-glutamyl-[protein] + H2O = L-glutamyl-[protein] + ADP-D-ribose + H(+). It catalyses the reaction alpha-NAD(+) + H2O = ADP-D-ribose + nicotinamide + H(+). Its activity is regulated as follows. Subject to competitive inhibition by the product ADP-ribose. In terms of biological role, ADP-ribose glycohydrolase that hydrolyzes ADP-ribose and acts on different substrates, such as proteins ADP-ribosylated on glutamate and O-acetyl-ADP-D-ribose. Specifically acts as a glutamate mono-ADP-ribosylhydrolase by mediating the removal of mono-ADP-ribose attached to glutamate residues on proteins. Does not act on poly-ADP-ribosylated proteins: the poly-ADP-ribose chain of poly-ADP-ribosylated glutamate residues must by hydrolyzed into mono-ADP-ribosylated glutamate by PARG to become a substrate for OARD1. Deacetylates O-acetyl-ADP ribose, a signaling molecule generated by the deacetylation of acetylated lysine residues in histones and other proteins. Catalyzes the deacylation of O-acetyl-ADP-ribose, O-propionyl-ADP-ribose and O-butyryl-ADP-ribose, yielding ADP-ribose plus acetate, propionate and butyrate, respectively. The polypeptide is ADP-ribose glycohydrolase OARD1 (Bos taurus (Bovine)).